Here is a 151-residue protein sequence, read N- to C-terminus: Macrodomain Ter protein (151 aa).

This sequence belongs to the MatP family. In terms of assembly, homodimer.

The protein localises to the cytoplasm. Its function is as follows. Required for spatial organization of the terminus region of the chromosome (Ter macrodomain) during the cell cycle. Prevents early segregation of duplicated Ter macrodomains during cell division. Binds specifically to matS, which is a 13 bp signature motif repeated within the Ter macrodomain. The chain is Macrodomain Ter protein from Cronobacter sakazakii (strain ATCC BAA-894) (Enterobacter sakazakii).